Here is a 901-residue protein sequence, read N- to C-terminus: Probable inorganic carbon transporter subunit DabA (901 aa).

Positions 424, 426, 606, and 621 each coordinate Zn(2+).

The protein belongs to the inorganic carbon transporter (TC 9.A.2) DabA family. As to quaternary structure, forms a complex with DabB. Zn(2+) serves as cofactor.

The protein resides in the cell membrane. Part of an energy-coupled inorganic carbon pump. This Staphylococcus aureus (strain bovine RF122 / ET3-1) protein is Probable inorganic carbon transporter subunit DabA.